The following is a 569-amino-acid chain: Sulfite reductase [NADPH] hemoprotein beta-component (569 aa).

[4Fe-4S] cluster is bound by residues Cys433, Cys439, Cys478, and Cys482. Cys482 is a binding site for siroheme.

This sequence belongs to the nitrite and sulfite reductase 4Fe-4S domain family. As to quaternary structure, alpha(8)-beta(8). The alpha component is a flavoprotein, the beta component is a hemoprotein. Siroheme serves as cofactor. [4Fe-4S] cluster is required as a cofactor.

The enzyme catalyses hydrogen sulfide + 3 NADP(+) + 3 H2O = sulfite + 3 NADPH + 4 H(+). Its pathway is sulfur metabolism; hydrogen sulfide biosynthesis; hydrogen sulfide from sulfite (NADPH route): step 1/1. Functionally, component of the sulfite reductase complex that catalyzes the 6-electron reduction of sulfite to sulfide. This is one of several activities required for the biosynthesis of L-cysteine from sulfate. This Blochmanniella floridana protein is Sulfite reductase [NADPH] hemoprotein beta-component.